A 162-amino-acid polypeptide reads, in one-letter code: 2-C-methyl-D-erythritol 2,4-cyclodiphosphate synthase (162 aa).

A divalent metal cation contacts are provided by Asp9 and His11. Residues 9-11 (DVH) and 37-38 (HS) each bind 4-CDP-2-C-methyl-D-erythritol 2-phosphate. Residue His45 participates in a divalent metal cation binding.

Belongs to the IspF family. In terms of assembly, homotrimer. A divalent metal cation is required as a cofactor.

It carries out the reaction 4-CDP-2-C-methyl-D-erythritol 2-phosphate = 2-C-methyl-D-erythritol 2,4-cyclic diphosphate + CMP. The protein operates within isoprenoid biosynthesis; isopentenyl diphosphate biosynthesis via DXP pathway; isopentenyl diphosphate from 1-deoxy-D-xylulose 5-phosphate: step 4/6. In terms of biological role, involved in the biosynthesis of isopentenyl diphosphate (IPP) and dimethylallyl diphosphate (DMAPP), two major building blocks of isoprenoid compounds. Catalyzes the conversion of 4-diphosphocytidyl-2-C-methyl-D-erythritol 2-phosphate (CDP-ME2P) to 2-C-methyl-D-erythritol 2,4-cyclodiphosphate (ME-CPP) with a corresponding release of cytidine 5-monophosphate (CMP). The chain is 2-C-methyl-D-erythritol 2,4-cyclodiphosphate synthase from Petrotoga mobilis (strain DSM 10674 / SJ95).